The following is a 341-amino-acid chain: Mytilin-2 (341 aa).

The signal sequence occupies residues 1-24; the sequence is MFKQSYQLCLVFLLFVCFYQSVKG.

As to expression, component of the organic matrix of calcified shell layers like nacre and prisms.

It is found in the secreted. The chain is Mytilin-2 from Mytilus californianus (California mussel).